The chain runs to 331 residues: Cytosolic arginine sensor for mTORC1 subunit 1 (331 aa).

The residue at position 14 (serine 14) is a Phosphoserine. Residues 72–139 enclose the ACT 1 domain; sequence AEATWLVMNV…SVVIHTLARE (68 aa). 110–111 provides a ligand contact to L-arginine; that stretch reads SV. The disordered stretch occupies residues 155–174; sequence GDDSSNGFPQAQHGPSPTVH. The span at 156 to 174 shows a compositional bias: polar residues; the sequence is DDSSNGFPQAQHGPSPTVH. An ACT 2 domain is found at 262-322; it reads WRMVRIGGQP…SCVIDILQRR (61 aa). L-arginine is bound by residues glycine 273, 279-280, and 299-303; these read IV and TFNFD.

This sequence belongs to the GATS family. Forms homodimers and heterodimers with CASTOR2. Interacts with the GATOR2 complex which is composed of MIOS, SEC13, SEH1L, WDR24 and WDR59; the interaction is negatively regulated by arginine. Interacts with TM4SF5; the interaction is positively regulated by leucine and is negatively regulated by arginine. Phosphorylation at Ser-14 by AKT1, promoting the interaction between CASTOR1 and RNF167. Post-translationally, ubiquitinated by RNF167 via 'Lys-29'-polyubiquitination, leading to its degradation, releasing the GATOR2 complex. Ubiquitination by RNF167 is promoted by phosphorylation at Ser-14 by AKT1.

It localises to the cytoplasm. The protein localises to the cytosol. Functionally, functions as an intracellular arginine sensor within the amino acid-sensing branch of the TORC1 signaling pathway. As a homodimer or a heterodimer with CASTOR2, binds and inhibits the GATOR subcomplex GATOR2 and thereby mTORC1. Binding of arginine to CASTOR1 allosterically disrupts the interaction of CASTOR1-containing dimers with GATOR2 which can in turn activate mTORC1 and the TORC1 signaling pathway. The polypeptide is Cytosolic arginine sensor for mTORC1 subunit 1 (Rattus norvegicus (Rat)).